The following is a 784-amino-acid chain: Copal-8-ol diphosphate hydratase TPSSA9, chloroplastic (784 aa).

Arg240 lines the substrate pocket. Mg(2+) contacts are provided by Asp372 and Asp374. The short motif at 372 to 375 is the DXDD motif element; sequence DIDD. Arg459 serves as a coordination point for substrate.

This sequence belongs to the terpene synthase family.

The protein resides in the plastid. Its subcellular location is the chloroplast. The catalysed reaction is (2E,6E,10E)-geranylgeranyl diphosphate + H2O = 8-hydroxycopalyl diphosphate. It functions in the pathway secondary metabolite biosynthesis; terpenoid biosynthesis. In terms of biological role, involved in the biosynthesis of labdane-type diterpenoid including sclareol, a diterpene-diol that is used as fragrance and flavoring, and has anticancer effects (able to kill leukemic and colon cancer cells by apoptosis). Sclareol can also be used as synthesis precursor of ambergris substitution fragance products such as ambrox. Terpene synthase that produces 8-hydroxycopalyl diphosphate from geranylgeranyl diphosphate (GGPP). The sequence is that of Copal-8-ol diphosphate hydratase TPSSA9, chloroplastic from Salvia sclarea (Clary sage).